The sequence spans 383 residues: Chromatin structure-remodeling complex subunit SFH1 (383 aa).

A disordered region spans residues 61–80 (DDDEKVHSDNGKGEGEEVGH). The span at 64-80 (EKVHSDNGKGEGEEVGH) shows a compositional bias: basic and acidic residues.

It belongs to the SNF5 family.

It localises to the nucleus. Part of the chromatin structure-remodeling complex (RSC) which is involved in transcription regulation and nucleosome positioning. RSC is responsible for the transfer of a histone octamer from a nucleosome core particle to naked DNA. The reaction requires ATP and involves an activated RSC-nucleosome intermediate. Remodeling reaction also involves DNA translocation, DNA twist and conformational change. As a reconfigurer of centromeric and flanking nucleosomes, RSC complex is required both for proper kinetochore function in chromosome segregation and, via a PKC1-dependent signaling pathway, for organization of the cellular cytoskeleton. This subunit is essential for mitotic growth and required for cell cycle progression. This Eremothecium gossypii (strain ATCC 10895 / CBS 109.51 / FGSC 9923 / NRRL Y-1056) (Yeast) protein is Chromatin structure-remodeling complex subunit SFH1 (SFH1).